Consider the following 1385-residue polypeptide: Serine-aspartate repeat-containing protein D (1385 aa).

The first 35 residues, Met-1–Ile-35, serve as a signal peptide directing secretion. The YSIRK-G/S signaling motif motif lies at Phe-23 to Ser-34. Residues Leu-36–Glu-568 form a ligand binding A region region. Disordered stretches follow at residues Glu-54 to Glu-162 and Glu-200 to Ala-224. Composition is skewed to polar residues over residues Glu-62 to Gln-71 and Glu-94 to Lys-109. Residues Lys-130 to Asn-145 are compositionally biased toward basic and acidic residues. The span at Thr-146–Gly-155 shows a compositional bias: polar residues. Over residues Asn-205–Asn-214 the composition is skewed to low complexity. CNA-B domains lie at Val-569–Pro-680, Lys-681–Pro-791, Lys-792–Pro-901, Thr-902–Pro-1012, and Lys-1013–Thr-1123. 3 disordered regions span residues Phe-856–Ile-886, Tyr-972–Thr-992, and Phe-1077–Ala-1361. 2 stretches are compositionally biased toward polar residues: residues Ser-860–Ser-869 and Tyr-972–Asn-981. Low complexity predominate over residues Thr-1081–Thr-1090. Acidic residues-rich tracts occupy residues Thr-1091–Glu-1101 and Tyr-1118–Ser-1324. An LPXTG sorting signal motif is present at residues Leu-1348 to Gly-1352. Position 1351 is a pentaglycyl murein peptidoglycan amidated threonine (Thr-1351). A propeptide spans Gly-1352–Lys-1385 (removed by sortase).

This sequence belongs to the serine-aspartate repeat-containing protein (SDr) family. Interacts with host DSG1; this interaction increases S.aureus adherence to keratinocytes.

It localises to the secreted. Its subcellular location is the cell wall. Its function is as follows. Cell surface-associated calcium-binding protein which plays an important role in adhesion and pathogenesis. Mediates interactions with components of the extracellular matrix such as host DSG1 to promote bacterial adhesion to host cells. Contributes to the resistance to killing by innate immune components such as neutrophils present in blood and thus attenuates bacterial clearance. The sequence is that of Serine-aspartate repeat-containing protein D (sdrD) from Staphylococcus aureus (strain Mu50 / ATCC 700699).